The primary structure comprises 491 residues: Nicotinamide phosphoribosyltransferase (491 aa).

Position 1 is an N-acetylmethionine (Met1). Position 188 is a phosphotyrosine (Tyr188). Residue Arg196 coordinates diphosphate. A beta-nicotinamide D-ribonucleotide-binding site is contributed by Asp219. The diphosphate site is built by His247 and Arg311. Beta-nicotinamide D-ribonucleotide-binding positions include 311 to 313 (RPD), 353 to 354 (GD), Gly384, and Arg392. Ser472 carries the phosphoserine modification.

This sequence belongs to the NAPRTase family. Homodimer.

The protein resides in the nucleus. Its subcellular location is the cytoplasm. The protein localises to the secreted. It catalyses the reaction beta-nicotinamide D-ribonucleotide + diphosphate = 5-phospho-alpha-D-ribose 1-diphosphate + nicotinamide + H(+). It functions in the pathway cofactor biosynthesis; NAD(+) biosynthesis; nicotinamide D-ribonucleotide from 5-phospho-alpha-D-ribose 1-diphosphate and nicotinamide: step 1/1. Functionally, catalyzes the condensation of nicotinamide with 5-phosphoribosyl-1-pyrophosphate to yield nicotinamide mononucleotide, an intermediate in the biosynthesis of NAD. It is the rate limiting component in the mammalian NAD biosynthesis pathway. The secreted form behaves both as a cytokine with immunomodulating properties and an adipokine with anti-diabetic properties, it has no enzymatic activity, partly because of lack of activation by ATP, which has a low level in extracellular space and plasma. Plays a role in the modulation of circadian clock function. Plays a role in the modulation of circadian clock function. NAMPT-dependent oscillatory production of NAD regulates oscillation of clock target gene expression by releasing the core clock component: CLOCK-BMAL1 heterodimer from NAD-dependent SIRT1-mediated suppression. In Sus scrofa (Pig), this protein is Nicotinamide phosphoribosyltransferase (NAMPT).